A 346-amino-acid polypeptide reads, in one-letter code: Phosphate acyltransferase (346 aa).

It belongs to the PlsX family. Homodimer. Probably interacts with PlsY.

It is found in the cytoplasm. It catalyses the reaction a fatty acyl-[ACP] + phosphate = an acyl phosphate + holo-[ACP]. The protein operates within lipid metabolism; phospholipid metabolism. Functionally, catalyzes the reversible formation of acyl-phosphate (acyl-PO(4)) from acyl-[acyl-carrier-protein] (acyl-ACP). This enzyme utilizes acyl-ACP as fatty acyl donor, but not acyl-CoA. The protein is Phosphate acyltransferase of Brucella suis biovar 1 (strain 1330).